Reading from the N-terminus, the 273-residue chain is Protein N-terminal and lysine N-methyltransferase EFM7 (273 aa).

A disordered region spans residues 1 to 32 (MSDIEDLASGGLFDEPKDFYKPEEQPGSDSYA). Basic and acidic residues predominate over residues 14–24 (DEPKDFYKPEE). S-adenosyl-L-methionine-binding positions include tryptophan 65, 92–94 (GAG), aspartate 114, tryptophan 161, and serine 183.

It belongs to the class I-like SAM-binding methyltransferase superfamily. EFM7 family.

The protein localises to the cytoplasm. In terms of biological role, S-adenosyl-L-methionine-dependent protein methyltransferase that trimethylates the N-terminal glycine 'Gly-2' of elongation factor 1-alpha, before also catalyzing the mono- and dimethylation of 'Lys-3'. This chain is Protein N-terminal and lysine N-methyltransferase EFM7, found in Yarrowia lipolytica (strain CLIB 122 / E 150) (Yeast).